The sequence spans 175 residues: Adenine phosphoribosyltransferase (175 aa).

Belongs to the purine/pyrimidine phosphoribosyltransferase family. In terms of assembly, homodimer.

It localises to the cytoplasm. It carries out the reaction AMP + diphosphate = 5-phospho-alpha-D-ribose 1-diphosphate + adenine. It participates in purine metabolism; AMP biosynthesis via salvage pathway; AMP from adenine: step 1/1. Functionally, catalyzes a salvage reaction resulting in the formation of AMP, that is energically less costly than de novo synthesis. The polypeptide is Adenine phosphoribosyltransferase (Francisella philomiragia subsp. philomiragia (strain ATCC 25017 / CCUG 19701 / FSC 153 / O#319-036)).